The chain runs to 473 residues: Monocarboxylate transporter 4 (473 aa).

Residues 1-17 (MGAVVVDDGPSGVKAPD) are Cytoplasmic-facing. The helical transmembrane segment at 18-38 (GGWGWAVLFGCFIITGFSYAF) threads the bilayer. Over 39-61 (PKAVSVFFKELIREFGVGYSDTA) the chain is Extracellular. A helical transmembrane segment spans residues 62-82 (WISSILLAMLYGTGPLCSVCV). Residues 83-91 (NRFGCRPVM) are Cytoplasmic-facing. The helical transmembrane segment at 92 to 112 (LVGGLFASMGMVIASFCTSIV) threads the bilayer. At 113–115 (QIY) the chain is on the extracellular side. A helical membrane pass occupies residues 116–136 (LTAGVITGLGLALNFQPSLIM). Residues 137-149 (LNRYFDKRRPLAN) lie on the Cytoplasmic side of the membrane. A helical transmembrane segment spans residues 150–170 (GLSAAGSPVFLCALSPLGQIL). The Extracellular portion of the chain corresponds to 171–179 (QHEYGWRGG). The chain crosses the membrane as a helical span at residues 180 to 200 (FLILGGMLLNCCVCGALMRPL). At 201-231 (EPPKKSEATKEPAEKKAKKKLLDFSVFKDGG) the chain is on the cytoplasmic side. A helical transmembrane segment spans residues 232 to 252 (FVIYTLAASIMVLGLFVPPVF). Over 253–268 (VVSYAKDLGYQDTKAA) the chain is Extracellular. Residues 269–289 (FLLTILGFIDIFARPICGMVA) traverse the membrane as a helical segment. Residues 290–297 (GLKWVRPR) are Cytoplasmic-facing. Residues 298–318 (CVYLFSFAMIFNGFTDLMGSM) traverse the membrane as a helical segment. Residues 319-321 (SVD) lie on the Extracellular side of the membrane. The chain crosses the membrane as a helical span at residues 322–342 (YGGLVVFCIFFGISYGMVGAL). Topologically, residues 343-358 (QFEVLMAIVGTQKFSS) are cytoplasmic. A helical membrane pass occupies residues 359 to 379 (AIGLVLLAEAMAVLIGPPSAG). Residues 380–388 (KLLDLTRRY) lie on the Extracellular side of the membrane. Residues 389 to 409 (MFVFIIAGIEVTTSALVLALG) traverse the membrane as a helical segment. At 410-473 (NFFCIKKKPA…EVVTNPETCV (64 aa)) the chain is on the cytoplasmic side. Residues 421 to 447 (PHTKEAAAEREELNKSEDKTPEDAKVD) form a disordered region. Basolateral sorting signal stretches follow at residues 427–449 (AAEREELNKSEDKTPEDAKVDSI) and 449–473 (IEVEQFLKDEPEKNGEVVTNPETCV).

It belongs to the major facilitator superfamily. Monocarboxylate porter (TC 2.A.1.13) family. In terms of assembly, interacts with BSG; interaction mediates SLC16A3 targeting to the plasma membrane.

The protein resides in the cell membrane. It is found in the basolateral cell membrane. The enzyme catalyses (S)-lactate(in) + H(+)(in) = (S)-lactate(out) + H(+)(out). It carries out the reaction pyruvate(out) + H(+)(out) = pyruvate(in) + H(+)(in). Its function is as follows. Proton-dependent transporter of monocarboxylates such as L-lactate and pyruvate. Plays a predominant role in the L-lactate efflux from highly glycolytic cells. The sequence is that of Monocarboxylate transporter 4 (SLC16A3) from Gallus gallus (Chicken).